Consider the following 306-residue polypeptide: Homoserine O-acetyltransferase (306 aa).

C142 serves as the catalytic Acyl-thioester intermediate. The substrate site is built by K163 and S192. The active-site Proton acceptor is H235. E237 is an active-site residue. R249 contacts substrate.

It belongs to the MetA family.

It is found in the cytoplasm. The catalysed reaction is L-homoserine + acetyl-CoA = O-acetyl-L-homoserine + CoA. The protein operates within amino-acid biosynthesis; L-methionine biosynthesis via de novo pathway; O-acetyl-L-homoserine from L-homoserine: step 1/1. Its function is as follows. Transfers an acetyl group from acetyl-CoA to L-homoserine, forming acetyl-L-homoserine. The chain is Homoserine O-acetyltransferase from Clostridium botulinum (strain Eklund 17B / Type B).